Here is a 1115-residue protein sequence, read N- to C-terminus: Neural cell adhesion molecule 1 (1115 aa).

A signal peptide spans 1-19 (MLRTKDLIWTLFFLGTAVS). Ig-like C2-type domains lie at 20–111 (LQVD…ATVN), 116–205 (QKLM…KDIQ), 212–302 (PTVQ…ASIH), 309–402 (PKIT…MYLE), and 407–492 (PKLQ…ESLE). The Extracellular portion of the chain corresponds to 20-711 (LQVDIVPSQG…NGSPTAGLST (692 aa)). 2 disulfides stabilise this stretch: Cys-41/Cys-96 and Cys-139/Cys-189. Heparin contacts are provided by residues 152–156 (KHKGR) and 161–165 (KKDVR). The N-linked (GlcNAc...) asparagine; partial glycan is linked to Asn-222. Cysteines 235 and 288 form a disulfide. 5 N-linked (GlcNAc...) asparagine glycosylation sites follow: Asn-316, Asn-348, Asn-424, Asn-450, and Asn-479. A disulfide bond links Cys-330 and Cys-386. An intrachain disulfide couples Cys-427 to Cys-480. Fibronectin type-III domains are found at residues 500–599 (TPSS…TQPV) and 601–696 (EPSA…SAQP). The GPI-anchor amidated serine moiety is linked to residue Thr-706. A helical membrane pass occupies residues 712–729 (GAIVGILIVIFVLLLVVM). Residues 730–1115 (DITCYFLNKC…TQTKENESKA (386 aa)) lie on the Cytoplasmic side of the membrane. Disordered stretches follow at residues 756–809 (GAKG…TEPE), 839–912 (FATA…SASN), and 924–1115 (VLSP…ESKA). Positions 758–799 (KGKDMEEGKAAFSKDESKEPIVEVRTEEERTPNHDGGKHTEP) are enriched in basic and acidic residues. Residues Ser-770 and Ser-774 each carry the phosphoserine modification. Low complexity-rich tracts occupy residues 800–809 (NETTPLTEPE), 845–856 (SPTSETTTLTSS), and 876–896 (TPSKGVTASSSSPASAPKVAP). 2 positions are modified to phosphoserine: Ser-887 and Ser-890. 2 stretches are compositionally biased toward polar residues: residues 902–912 (DTPTSAPSASN) and 926–935 (SPSTPASAGE). Position 926 is a phosphoserine (Ser-926). Thr-929 carries the phosphothreonine modification. 2 stretches are compositionally biased toward low complexity: residues 936–974 (TSKAPPASKASPAPTPTPAGAASPLAAVAAPATDAPQAK) and 999–1012 (AATAPASPKSKAAT). Phosphoserine is present on residues Ser-946 and Ser-958. Thr-1001 bears the Phosphothreonine mark. The residue at position 1005 (Ser-1005) is a Phosphoserine. Basic and acidic residues-rich tracts occupy residues 1019–1037 (EDLKMDEGNFKTPDIDLAK) and 1074–1091 (KTEKGPVETKSEPPESEA). At Thr-1030 the chain carries Phosphothreonine.

As to quaternary structure, interacts with MDK. Found in a complex with SLC39A6, SLC39A10 and with NCAM1; this complex controls NCAM1 phosphorylation and integration into focal adhesion complexes during epithelial-tomesenchymal transition. Interacts with synaptic plasticity regulator PANTS. Post-translationally, polysialylated by ST8SIA2 and ST8SIA4. Polysialylation modulates cell interactions by confering both attractive and repulsive properties that are highly regulated by ST8SIA2 and ST8SIA4. Polysialylation is formed on a-2,3-linked sialic acid of core glycans.

It localises to the cell membrane. In terms of biological role, this protein is a cell adhesion molecule involved in neuron-neuron adhesion, neurite fasciculation, outgrowth of neurites, etc. The chain is Neural cell adhesion molecule 1 from Mus musculus (Mouse).